The primary structure comprises 363 residues: Spermatogenesis-associated protein 22 (363 aa).

Composition is skewed to polar residues over residues 1–12 and 145–157; these read MKRSLNENSARS and SCPM…QQKQ. Disordered regions lie at residues 1-51 and 145-169; these read MKRS…DNYD and SCPM…LPRN.

In terms of assembly, component of a multiprotein complex with MEIOB and RPA2. Interacts with MEIOB. Interacts with the complex BRME1:HSF2BP:BRCA2. In terms of tissue distribution, expressed in testis.

Its subcellular location is the chromosome. In terms of biological role, meiosis-specific protein required for homologous recombination in meiosis I. The sequence is that of Spermatogenesis-associated protein 22 (SPATA22) from Macaca fascicularis (Crab-eating macaque).